The sequence spans 355 residues: Probable low-specificity L-threonine aldolase 2 (355 aa).

Lys211 carries the post-translational modification N6-(pyridoxal phosphate)lysine.

Belongs to the threonine aldolase family. The cofactor is pyridoxal 5'-phosphate. As to expression, expressed in roots, leaf vasculature and flowers.

The enzyme catalyses L-threonine = acetaldehyde + glycine. The catalysed reaction is L-allo-threonine = acetaldehyde + glycine. The protein operates within amino-acid degradation; L-threonine degradation via aldolase pathway; acetaldehyde and glycine from L-threonine: step 1/1. In terms of biological role, threonine aldolase involved in threonine degradation to glycine. May play a role in the removal of L-allo-threonine. The sequence is that of Probable low-specificity L-threonine aldolase 2 (THA2) from Arabidopsis thaliana (Mouse-ear cress).